The following is a 127-amino-acid chain: Transcription initiation factor IIA subunit 2 (127 aa).

It belongs to the TFIIA subunit 2 family. In terms of assembly, TFIIA is a heterodimer composed of the large TOA1 and the small TOA2 subunits.

Its subcellular location is the nucleus. TFIIA is a component of the transcription machinery of RNA polymerase II and plays an important role in transcriptional activation. TFIIA in a complex with tbp mediates transcriptional activity. The sequence is that of Transcription initiation factor IIA subunit 2 (TOA2) from Cryptococcus neoformans var. neoformans serotype D (strain B-3501A) (Filobasidiella neoformans).